Here is a 40-residue protein sequence, read N- to C-terminus: Photosystem II reaction center protein J (40 aa).

The helical transmembrane segment at 8–28 (IPLWLIGTVTGILVIGLIGVF) threads the bilayer.

Belongs to the PsbJ family. In terms of assembly, PSII is composed of 1 copy each of membrane proteins PsbA, PsbB, PsbC, PsbD, PsbE, PsbF, PsbH, PsbI, PsbJ, PsbK, PsbL, PsbM, PsbT, PsbX, PsbY, PsbZ, Psb30/Ycf12, at least 3 peripheral proteins of the oxygen-evolving complex and a large number of cofactors. It forms dimeric complexes.

It localises to the plastid. The protein resides in the chloroplast thylakoid membrane. Its function is as follows. One of the components of the core complex of photosystem II (PSII). PSII is a light-driven water:plastoquinone oxidoreductase that uses light energy to abstract electrons from H(2)O, generating O(2) and a proton gradient subsequently used for ATP formation. It consists of a core antenna complex that captures photons, and an electron transfer chain that converts photonic excitation into a charge separation. This chain is Photosystem II reaction center protein J, found in Nymphaea alba (White water-lily).